Consider the following 125-residue polypeptide: 14 kDa phosphohistidine phosphatase (125 aa).

The residue at position 2 (A2) is an N-acetylalanine. K21 contributes to the substrate binding site. H53 (proton acceptor) is an active-site residue. Substrate is bound at residue 94–96 (SMG).

As to quaternary structure, monomer.

It is found in the cytoplasm. It catalyses the reaction N(pros)-phospho-L-histidyl-[protein] + H2O = L-histidyl-[protein] + phosphate. The enzyme catalyses N(tele)-phospho-L-histidyl-[protein] + H2O = L-histidyl-[protein] + phosphate. In terms of biological role, exhibits phosphohistidine phosphatase activity. Functionally, may have a significant involvement in neuronal signaling. The sequence is that of 14 kDa phosphohistidine phosphatase (PHPT1) from Oryctolagus cuniculus (Rabbit).